Consider the following 325-residue polypeptide: Lipoyl synthase (325 aa).

Cys72, Cys77, Cys83, Cys98, Cys102, Cys105, and Ser312 together coordinate [4Fe-4S] cluster. Residues 84–301 (FAGGTATFMI…AEEGERMGFK (218 aa)) form the Radical SAM core domain.

It belongs to the radical SAM superfamily. Lipoyl synthase family. The cofactor is [4Fe-4S] cluster.

The protein localises to the cytoplasm. It catalyses the reaction [[Fe-S] cluster scaffold protein carrying a second [4Fe-4S](2+) cluster] + N(6)-octanoyl-L-lysyl-[protein] + 2 oxidized [2Fe-2S]-[ferredoxin] + 2 S-adenosyl-L-methionine + 4 H(+) = [[Fe-S] cluster scaffold protein] + N(6)-[(R)-dihydrolipoyl]-L-lysyl-[protein] + 4 Fe(3+) + 2 hydrogen sulfide + 2 5'-deoxyadenosine + 2 L-methionine + 2 reduced [2Fe-2S]-[ferredoxin]. Its pathway is protein modification; protein lipoylation via endogenous pathway; protein N(6)-(lipoyl)lysine from octanoyl-[acyl-carrier-protein]: step 2/2. Its function is as follows. Catalyzes the radical-mediated insertion of two sulfur atoms into the C-6 and C-8 positions of the octanoyl moiety bound to the lipoyl domains of lipoate-dependent enzymes, thereby converting the octanoylated domains into lipoylated derivatives. In Azotobacter vinelandii (strain DJ / ATCC BAA-1303), this protein is Lipoyl synthase.